Reading from the N-terminus, the 248-residue chain is Large ribosomal subunit protein bL9m (248 aa).

Residues 1 to 25 constitute a mitochondrion transit peptide; it reads MLKNIYVTPLNLLKSATSLQQQVRT.

It belongs to the bacterial ribosomal protein bL9 family. In terms of assembly, component of the mitochondrial ribosome large subunit (39S) which comprises a 16S rRNA and about 50 distinct proteins.

The protein localises to the mitochondrion. The protein is Large ribosomal subunit protein bL9m (mRpL9) of Drosophila melanogaster (Fruit fly).